The sequence spans 281 residues: MASLKFTKMEGIGNDYVYIDSTRNDIRLTPEQIQKISDRNFGIGSDGVIFIRNSKQGDFMMDMYNSDGSSSEMCGNGIRCVAKYIYDHGLTSSKNPKIETGAGILEVDLKIGSGNKVDLVSVDMGKPVLVPSQIPVVWKNEETIIDQPLEIGDKNLKFTAVSMGNPHCVIFVDDSDEFPVRGIGPLIERHSIFPKRVNVEFVTIRGKDHLYQRTWERGAGETLACGTGACAVMVAGNLTGRSGKDVQIDLRGGTLRIQWQESGNILMTGPAREIFSGEIEI.

Residues Asn-14 and Asn-65 each contribute to the substrate site. Catalysis depends on Cys-74, which acts as the Proton donor. Substrate is bound by residues 75-76, Asn-165, Asn-198, and 216-217; these read GN and ER. Cys-225 functions as the Proton acceptor in the catalytic mechanism. 226-227 is a binding site for substrate; that stretch reads GT.

Belongs to the diaminopimelate epimerase family. In terms of assembly, homodimer.

It is found in the cytoplasm. The catalysed reaction is (2S,6S)-2,6-diaminopimelate = meso-2,6-diaminopimelate. Its pathway is amino-acid biosynthesis; L-lysine biosynthesis via DAP pathway; DL-2,6-diaminopimelate from LL-2,6-diaminopimelate: step 1/1. Its function is as follows. Catalyzes the stereoinversion of LL-2,6-diaminopimelate (L,L-DAP) to meso-diaminopimelate (meso-DAP), a precursor of L-lysine and an essential component of the bacterial peptidoglycan. The protein is Diaminopimelate epimerase of Leptospira interrogans serogroup Icterohaemorrhagiae serovar copenhageni (strain Fiocruz L1-130).